Reading from the N-terminus, the 361-residue chain is Diacylglycerol O-acyltransferase 2 (361 aa).

Residues 1 to 42 are Cytoplasmic-facing; it reads MKTIIAAYSGVLRGTGSSLLSAVHDLPNIPWLSKSSVVRHLQ. The chain crosses the membrane as a helical span at residues 43–61; sequence IISVLQWVLSFLILGVACT. Topologically, residues 62 to 65 are lumenal; it reads AVLV. Residues 66–85 form a helical membrane-spanning segment; sequence YIFCTDLWLIAALYLTWMVL. Over 86 to 361 the chain is Cytoplasmic; that stretch reads DWNTPYKGGR…LHDSEMLEIV (276 aa).

Belongs to the diacylglycerol acyltransferase family.

It localises to the endoplasmic reticulum membrane. The protein localises to the lipid droplet. Its subcellular location is the cytoplasm. It is found in the perinuclear region. The catalysed reaction is an acyl-CoA + a 1,2-diacyl-sn-glycerol = a triacyl-sn-glycerol + CoA. The enzyme catalyses all-trans-retinol + an acyl-CoA = an all-trans-retinyl ester + CoA. It catalyses the reaction 2-(9Z-octadecenoyl)-glycerol + (9Z)-octadecenoyl-CoA = 1,2-di-(9Z-octadecenoyl)-sn-glycerol + CoA. It carries out the reaction 1,2-di-(9Z-octadecenoyl)-sn-glycerol + (9Z)-octadecenoyl-CoA = 1,2,3-tri-(9Z-octadecenoyl)-glycerol + CoA. The catalysed reaction is all-trans-retinol + hexadecanoyl-CoA = all-trans-retinyl hexadecanoate + CoA. The enzyme catalyses 1-O-(9Z-octadecenyl)-glycerol + (9Z)-octadecenoyl-CoA = 1-O-(9Z-octadecyl)-3-(9Z-octadecenoyl)-glycerol + CoA. It catalyses the reaction 1-(9Z-octadecenoyl)-glycerol + (9Z)-octadecenoyl-CoA = 1,2-di-(9Z-octadecenoyl)-glycerol + CoA. It carries out the reaction 1,2-di-(9Z-octadecenoyl)-sn-glycerol + hexadecanoyl-CoA = 1,2-di-(9Z)-octadecenoyl-3-hexadecanoyl-sn-glycerol + CoA. The catalysed reaction is 1,3-di-(9Z-octadecenoyl)-glycerol + (9Z)-octadecenoyl-CoA = 1,2,3-tri-(9Z-octadecenoyl)-glycerol + CoA. The enzyme catalyses 2,3-di-(9Z)-octadecenoyl-sn-glycerol + (9Z)-octadecenoyl-CoA = 1,2,3-tri-(9Z-octadecenoyl)-glycerol + CoA. It catalyses the reaction 2-(9Z-octadecenoyl)-glycerol + hexadecanoyl-CoA = 1-hexadecanoyl-2-(9Z-octadecenoyl)-sn-glycerol + CoA. Its pathway is glycerolipid metabolism; triacylglycerol biosynthesis. Its function is as follows. Essential acyltransferase that catalyzes the terminal and only committed step in triacylglycerol synthesis by using diacylglycerol and fatty acyl CoA as substrates. Required for synthesis and storage of intracellular triglycerides. Probably plays a central role in cytosolic lipid accumulation. This chain is Diacylglycerol O-acyltransferase 2 (dgat2), found in Xenopus tropicalis (Western clawed frog).